Here is a 151-residue protein sequence, read N- to C-terminus: Deoxyuridine 5'-triphosphate nucleotidohydrolase (151 aa).

Residues Arg-70–Gly-72, Asn-83, Leu-87–Asp-89, and Met-97 contribute to the substrate site.

Belongs to the dUTPase family. It depends on Mg(2+) as a cofactor.

It carries out the reaction dUTP + H2O = dUMP + diphosphate + H(+). The protein operates within pyrimidine metabolism; dUMP biosynthesis; dUMP from dCTP (dUTP route): step 2/2. Functionally, this enzyme is involved in nucleotide metabolism: it produces dUMP, the immediate precursor of thymidine nucleotides and it decreases the intracellular concentration of dUTP so that uracil cannot be incorporated into DNA. This is Deoxyuridine 5'-triphosphate nucleotidohydrolase from Sodalis glossinidius (strain morsitans).